Here is a 332-residue protein sequence, read N- to C-terminus: Fructose-1,6-bisphosphatase class 1 (332 aa).

Residues Glu89, Asp110, Leu112, and Asp113 each coordinate Mg(2+). Substrate-binding positions include 113-116 (DGSS), Asn206, Tyr239, 257-259 (YLY), and Lys269. Residue Glu275 participates in Mg(2+) binding.

Belongs to the FBPase class 1 family. In terms of assembly, homotetramer. It depends on Mg(2+) as a cofactor.

The protein localises to the cytoplasm. The catalysed reaction is beta-D-fructose 1,6-bisphosphate + H2O = beta-D-fructose 6-phosphate + phosphate. It participates in carbohydrate biosynthesis; gluconeogenesis. This is Fructose-1,6-bisphosphatase class 1 from Klebsiella pneumoniae (strain 342).